Here is a 662-residue protein sequence, read N- to C-terminus: Intracellular exo-alpha-(1-&gt;5)-L-arabinofuranosidase (662 aa).

Alpha-L-arabinofuranose-binding residues include E27, N72, and N174. E175 (proton donor/acceptor) is an active-site residue. Residues Y246, E294, and Q352 each coordinate alpha-L-arabinofuranose. The Nucleophile role is filled by E294. Disordered regions lie at residues 454 to 483, 497 to 548, and 588 to 662; these read LADA…SLRD, SIRC…RTAR, and WTRW…ARRC. Positions 519 to 533 are enriched in low complexity; sequence TGTPPAAPPSSSSAP. Residues 537–547 show a composition bias toward basic and acidic residues; the sequence is PTARRSPDRTA. Composition is skewed to low complexity over residues 590–603, 628–641, and 649–662; these read RWAP…PSRR, RRSP…TPAP, and AGAS…ARRC.

Belongs to the glycosyl hydrolase 51 family. As to quaternary structure, homohexamer; trimer of dimers.

Its subcellular location is the cytoplasm. The enzyme catalyses Hydrolysis of terminal non-reducing alpha-L-arabinofuranoside residues in alpha-L-arabinosides.. It participates in glycan metabolism; L-arabinan degradation. Functionally, involved in the degradation of arabinan and is a key enzyme in the complete degradation of the plant cell wall. Catalyzes the cleavage of terminal alpha-(1-&gt;5)-arabinofuranosyl bonds in different hemicellulosic homopolysaccharides (arabino-oligoxylosides, branched and debranched arabinans). It acts rapidly on the short-chain arabino-oligoxylosides from digestion of xylan with xylanases. It hydrolyzes slowly arabinan and arabinoxylan from wheat and rye flour. The protein is Intracellular exo-alpha-(1-&gt;5)-L-arabinofuranosidase of Streptomyces lividans.